The chain runs to 491 residues: Chromosomal replication initiator protein DnaA (491 aa).

The tract at residues 1-69 (MTTWDKCLKK…TIQECHGNDL (69 aa)) is domain I, interacts with DnaA modulators. Residues 69 to 154 (LIIEYSNKKF…KEDEEYSFGL (86 aa)) form a domain II region. The segment at 155-371 (PLKEKYVFDS…GALNRVLTTS (217 aa)) is domain III, AAA+ region. Positions 199, 201, 202, and 203 each coordinate ATP. Residues 372–491 (KFNHKDPTIE…YELLLDKISR (120 aa)) are domain IV, binds dsDNA.

The protein belongs to the DnaA family. As to quaternary structure, oligomerizes as a right-handed, spiral filament on DNA at oriC.

It is found in the cytoplasm. Functionally, plays an essential role in the initiation and regulation of chromosomal replication. ATP-DnaA binds to the origin of replication (oriC) to initiate formation of the DNA replication initiation complex once per cell cycle. Binds the DnaA box (a 9 base pair repeat at the origin) and separates the double-stranded (ds)DNA. Forms a right-handed helical filament on oriC DNA; dsDNA binds to the exterior of the filament while single-stranded (ss)DNA is stabiized in the filament's interior. The ATP-DnaA-oriC complex binds and stabilizes one strand of the AT-rich DNA unwinding element (DUE), permitting loading of DNA polymerase. After initiation quickly degrades to an ADP-DnaA complex that is not apt for DNA replication. Binds acidic phospholipids. In Francisella tularensis subsp. novicida (strain U112), this protein is Chromosomal replication initiator protein DnaA.